The primary structure comprises 184 residues: MVLPLMICYRPIGIIHSPFKEPKDVPIQASAAKDIEGTVEVFPEFSEGLKDIEEFSHIILIYHFHRAKFKGLLVEPYMHEEKHGVFATRAPARPNPIGISVVRLVERKGNILRIRDVDILDGTPLLDIKPYVPEFDVRENVRIGWLEKNVHKLEKARDDGRFFSLNFNYIFPASLLEAPERAKL.

The region spanning 9 to 140 (YRPIGIIHSP…YVPEFDVREN (132 aa)) is the TsaA-like domain. S-adenosyl-L-methionine contacts are provided by residues 26-28 (PIQ), 65-66 (HR), Arg-89, and 120-123 (LDGT).

The protein belongs to the tRNA methyltransferase O family.

This is Probable S-adenosyl-L-methionine-binding protein PYRAB06630 from Pyrococcus abyssi (strain GE5 / Orsay).